A 187-amino-acid polypeptide reads, in one-letter code: Ribosome-recycling factor (187 aa).

The protein belongs to the RRF family.

It is found in the cytoplasm. In terms of biological role, responsible for the release of ribosomes from messenger RNA at the termination of protein biosynthesis. May increase the efficiency of translation by recycling ribosomes from one round of translation to another. In Orientia tsutsugamushi (strain Boryong) (Rickettsia tsutsugamushi), this protein is Ribosome-recycling factor.